A 595-amino-acid chain; its full sequence is MVVCFLWLLLPYAATTLSASVPGCVPSGALLPRPTELSQSQNIKDATERLSRSLDDAVSGRIKAGWDIANTSFSVSIVSPNGGDPRTGVLWEYHHLAEKNINGTKHLDGDSQYLIGSVSKIFSDLLLLKSDVDLQDPITKYLPQLKNASSPIDWDNISLLSLSEHLSGIPANTIGALQFYFLEPLYRALGFPPLNKTDYPPCGIADLNKGCTPEELLTELVNSHPVSEPYERPVYSQLSFTLFSLALANDTGKDYAQMLEEQVIRPLNLRNTGVSPGEDKRAVIPNVEQQGWGADYGYNAPGGGLYSSLNDLSTLVTKILDYSILQNPQATKKWLQPRSATSSLNTLVGQPWEILRTSGMTPKYPHMIDIYGKSGGAPGYISQINVIDQYGVGVVLSTAGPLDSRAAYIINEAVLSAILPAVEDEARKQAGMYVGEYTSQKVDNEDATDYAPIKLKTVIDNGTGIKLESLSRNDSDILEGIRKVWSATLSTVGQLASEMRVYPTGLERLATNDKSLVEQDWRINFDLIPNFNEQASDLPGLGKLEALCTSWQTVDWLYYAGVPMDRIVFIVDKEAGRVVGVEIPFLRSGIIQKLN.

Residues 1 to 18 (MVVCFLWLLLPYAATTLS) form the signal peptide. N-linked (GlcNAc...) asparagine glycosylation is found at Asn70 and Asn102. The Acyl-ester intermediate role is filled by Ser117. Asn147, Asn156, and Asn195 each carry an N-linked (GlcNAc...) asparagine glycan. Tyr235 functions as the Proton acceptor in the catalytic mechanism. Asn249, Asn461, and Asn473 each carry an N-linked (GlcNAc...) asparagine glycan.

Belongs to the beta-lactamase family.

The protein localises to the secreted. The catalysed reaction is a beta-lactam + H2O = a substituted beta-amino acid. This Arthroderma benhamiae (strain ATCC MYA-4681 / CBS 112371) (Trichophyton mentagrophytes) protein is Beta-lactamase-like protein ARB_00930.